The sequence spans 402 residues: Sensor protein kinase FleS (402 aa).

The Histidine kinase domain maps to 188-393; it reads SLAHQIRTPL…CATLILPLIP (206 aa). His191 is subject to Phosphohistidine; by autocatalysis.

The enzyme catalyses ATP + protein L-histidine = ADP + protein N-phospho-L-histidine.. Its function is as follows. Member of the two-component regulatory system FleS/FleR that regulates the expression of multiple genes involved in flagellar synthesis, adhesion, swarming, motility and antibiotic resistance. May function as a membrane-associated protein kinase that phosphorylates FleR in response to environmental signals leading to activation of specific gene promoters. This chain is Sensor protein kinase FleS (fleS), found in Pseudomonas aeruginosa (strain ATCC 15692 / DSM 22644 / CIP 104116 / JCM 14847 / LMG 12228 / 1C / PRS 101 / PAO1).